The following is a 288-amino-acid chain: Structure-specific endonuclease subunit SLX1 (288 aa).

The GIY-YIG domain maps to 10–93 (DFYCSYLLRS…QHSYKTRFIE (84 aa)). The SLX1-type zinc finger occupies 209–265 (CMICDKKIDYIHDEGTQMVGFCSDDECDFLSCLSCLYKEFTKNSKQIIPKSGHCPNC).

The protein belongs to the SLX1 family. Forms a heterodimer with SLX4. The cofactor is a divalent metal cation.

The protein localises to the nucleus. Catalytic subunit of the SLX1-SLX4 structure-specific endonuclease that resolves DNA secondary structures generated during DNA repair and recombination. Has endonuclease activity towards branched DNA substrates, introducing single-strand cuts in duplex DNA close to junctions with ss-DNA. This chain is Structure-specific endonuclease subunit SLX1, found in Kluyveromyces lactis (strain ATCC 8585 / CBS 2359 / DSM 70799 / NBRC 1267 / NRRL Y-1140 / WM37) (Yeast).